Reading from the N-terminus, the 353-residue chain is Glycerol-3-phosphate dehydrogenase [NAD(+)], cytoplasmic (353 aa).

A2 carries the blocked amino end (Ala) modification. Residues 11-16 (GSGNWG), F98, K121, and A155 contribute to the NAD(+) site. A substrate-binding site is contributed by K121. K206 serves as the catalytic Proton acceptor. NAD(+)-binding residues include R270 and Q299. 270-271 (RN) lines the substrate pocket.

Belongs to the NAD-dependent glycerol-3-phosphate dehydrogenase family. Homodimer.

It localises to the cytoplasm. It catalyses the reaction sn-glycerol 3-phosphate + NAD(+) = dihydroxyacetone phosphate + NADH + H(+). The protein operates within phospholipid metabolism; alpha-glycerophosphate cycle. This is Glycerol-3-phosphate dehydrogenase [NAD(+)], cytoplasmic from Drosophila virilis (Fruit fly).